The primary structure comprises 562 residues: MLACLPGPGDLSFQLLSHTQMNTGLQKWDTTQKMRTAHYPTPAELDAYAKKVANNPLTIKIFPNSVKVPQRKHVRRTVNGLDTSAQRYSPYPTQAATKAGLLAIVKVPAKSILKDFDGTRARLLPEAIMNPPVAPYATVAPSTLAHPQAQALARQQALQHAQTLAHAPPQTLQHPQGIPPPQALSHPQSLQQPQGLGHPQPMAQTQGLVHPQALAHQGLQHPHNPLLHGGRKMPDSDAPPNVTVSTSTIPLSMAATLQHSQPPDLSSIVHQINQFCQTRAGISTTSVCEGQIANPSPISRSLLINASTRVSTHSVPTPMPSCVVNPMEHTHAATAALPAAGPVNLPTGISRVPTGYPSDLKPVTWNQHQLAHLQQMCSEASGTPAPGLTGKHAAGRELAGPGFVGKAPAYPQELCLAQSFHLKPPLEKPTPSPPVNGMAAPLAYPNGHYFQPLWNNILPTPNSDSSGSQDLAMPFHGGQPTGAPLDCAAAPGAHYRAGTGGGPVASQNSLMQTVDYLSGDFQQACFREQSLAMLSKAHRAPGNRAPDPTESRSLHIQHPGYR.

2 stretches are compositionally biased toward low complexity: residues 155–167 (QQALQHAQTLAHA) and 183–201 (ALSHPQSLQQPQGLGHPQP). 3 disordered regions span residues 155-203 (QQAL…QPMA), 219-245 (LQHPHNPLLHGGRKMPDSDAPPNVTVS), and 537-562 (AHRAPGNRAPDPTESRSLHIQHPGYR).

It belongs to the FAM222 family.

The polypeptide is Protein FAM222B (FAM222B) (Homo sapiens (Human)).